A 222-amino-acid polypeptide reads, in one-letter code: Methylthioribulose-1-phosphate dehydratase (222 aa).

Zn(2+) contacts are provided by His94 and His96.

Belongs to the aldolase class II family. MtnB subfamily. It depends on Zn(2+) as a cofactor.

The catalysed reaction is 5-(methylsulfanyl)-D-ribulose 1-phosphate = 5-methylsulfanyl-2,3-dioxopentyl phosphate + H2O. The protein operates within amino-acid biosynthesis; L-methionine biosynthesis via salvage pathway; L-methionine from S-methyl-5-thio-alpha-D-ribose 1-phosphate: step 2/6. Catalyzes the dehydration of methylthioribulose-1-phosphate (MTRu-1-P) into 2,3-diketo-5-methylthiopentyl-1-phosphate (DK-MTP-1-P). This chain is Methylthioribulose-1-phosphate dehydratase, found in Yersinia pseudotuberculosis serotype IB (strain PB1/+).